A 443-amino-acid chain; its full sequence is 26S proteasome regulatory subunit 4 homolog B (443 aa).

Disordered regions lie at residues 1-55 (MGQG…LPTV) and 87-108 (RLKPQEEKAEEDRSKVDDLRGT). Basic and acidic residues-rich tracts occupy residues 12-28 (QGDRKPDGGEKKEKKFE) and 87-106 (RLKPQEEKAEEDRSKVDDLR). 229 to 236 (GEPGTGKT) serves as a coordination point for ATP. Glycyl lysine isopeptide (Lys-Gly) (interchain with G-Cter in ubiquitin) cross-links involve residues Lys-296 and Lys-433.

This sequence belongs to the AAA ATPase family. In terms of assembly, component of the 19S regulatory particle (RP/PA700) base subcomplex of the 26S proteasome. The 26S proteasome is composed of a core protease (CP), known as the 20S proteasome, capped at one or both ends by the 19S regulatory particle (RP/PA700). The RP/PA700 complex is composed of at least 17 different subunits in two subcomplexes, the base and the lid, which form the portions proximal and distal to the 20S proteolytic core, respectively. In terms of tissue distribution, preferentially expressed in the root and shoot apical meristem.

It is found in the cytoplasm. The protein resides in the nucleus. Functionally, the 26S protease is involved in the ATP-dependent degradation of ubiquitinated proteins. The regulatory (or ATPase) complex confers ATP dependency and substrate specificity to the 26S complex. Acts redundantly with RPT2A in the regulation of gametogenesis. With RPT2A plays a critical role in 26S proteasome assembly. The protein is 26S proteasome regulatory subunit 4 homolog B of Arabidopsis thaliana (Mouse-ear cress).